Reading from the N-terminus, the 211-residue chain is Redox-sensing transcriptional repressor Rex (211 aa).

Positions 17-56 form a DNA-binding region, H-T-H motif; it reads KYHRYLEELMKNEVDRISSKELGEKIGFTASQIRQDLNCF. 91 to 96 serves as a coordination point for NAD(+); that stretch reads GAGNIG.

This sequence belongs to the transcriptional regulatory Rex family. Homodimer.

Its subcellular location is the cytoplasm. Functionally, modulates transcription in response to changes in cellular NADH/NAD(+) redox state. This Clostridium beijerinckii (strain ATCC 51743 / NCIMB 8052) (Clostridium acetobutylicum) protein is Redox-sensing transcriptional repressor Rex.